The chain runs to 208 residues: Large ribosomal subunit protein bL25 (208 aa).

The tract at residues 188–208 (AVETETEEETTTGESPAQPAE) is disordered.

Belongs to the bacterial ribosomal protein bL25 family. CTC subfamily. In terms of assembly, part of the 50S ribosomal subunit; part of the 5S rRNA/L5/L18/L25 subcomplex. Contacts the 5S rRNA. Binds to the 5S rRNA independently of L5 and L18.

This is one of the proteins that binds to the 5S RNA in the ribosome where it forms part of the central protuberance. The protein is Large ribosomal subunit protein bL25 of Moorella thermoacetica (strain ATCC 39073 / JCM 9320).